The following is a 261-amino-acid chain: 3'-5' ssDNA/RNA exonuclease TatD (261 aa).

A divalent metal cation is bound by residues glutamate 92, histidine 128, and histidine 153.

This sequence belongs to the metallo-dependent hydrolases superfamily. TatD-type hydrolase family. TatD subfamily. As to quaternary structure, monomer. Mg(2+) is required as a cofactor.

It localises to the cytoplasm. Functionally, 3'-5' exonuclease that prefers single-stranded DNA and RNA. May play a role in the H(2)O(2)-induced DNA damage repair. The protein is 3'-5' ssDNA/RNA exonuclease TatD of Erwinia billingiae (strain Eb661).